We begin with the raw amino-acid sequence, 224 residues long: tRNA (guanine-N(7)-)-methyltransferase (224 aa).

S-adenosyl-L-methionine-binding residues include E54, E79, E106, and D129. D129 is an active-site residue. Residues K133 and D165 each coordinate substrate.

It belongs to the class I-like SAM-binding methyltransferase superfamily. TrmB family.

It carries out the reaction guanosine(46) in tRNA + S-adenosyl-L-methionine = N(7)-methylguanosine(46) in tRNA + S-adenosyl-L-homocysteine. Its pathway is tRNA modification; N(7)-methylguanine-tRNA biosynthesis. In terms of biological role, catalyzes the formation of N(7)-methylguanine at position 46 (m7G46) in tRNA. The polypeptide is tRNA (guanine-N(7)-)-methyltransferase (Chlamydia trachomatis serovar D (strain ATCC VR-885 / DSM 19411 / UW-3/Cx)).